Here is a 246-residue protein sequence, read N- to C-terminus: ATP synthase subunit a, chloroplastic (246 aa).

5 helical membrane passes run 35 to 55 (GQVLLTSWFVLGTVILFGLIA), 94 to 114 (VPFIGTIFIFVLVSNWSGALL), 132 to 152 (DINTTVALALLTSISYFYAGI), 198 to 218 (LVVGVLVALVPLIVPIPVMLL), and 219 to 239 (GVFTSAIQALVFATLAGAYIG).

It belongs to the ATPase A chain family. As to quaternary structure, F-type ATPases have 2 components, CF(1) - the catalytic core - and CF(0) - the membrane proton channel. CF(1) has five subunits: alpha(3), beta(3), gamma(1), delta(1), epsilon(1). CF(0) has four main subunits: a, b, b' and c.

Its subcellular location is the plastid. It localises to the chloroplast thylakoid membrane. Its function is as follows. Key component of the proton channel; it plays a direct role in the translocation of protons across the membrane. The sequence is that of ATP synthase subunit a, chloroplastic from Stigeoclonium helveticum (Green alga).